The primary structure comprises 77 residues: uncharacterized protein (77 aa).

This is an uncharacterized protein from Bacillus subtilis (strain 168).